The chain runs to 290 residues: Elongation factor Ts, mitochondrial 1 (290 aa).

Belongs to the EF-Ts family.

It is found in the mitochondrion. Its function is as follows. Associates with the EF-Tu.GDP complex and induces the exchange of GDP to GTP. It remains bound to the aminoacyl-tRNA.EF-Tu.GTP complex up to the GTP hydrolysis stage on the ribosome. The sequence is that of Elongation factor Ts, mitochondrial 1 from Postia placenta (strain ATCC 44394 / Madison 698-R) (Brown rot fungus).